Consider the following 613-residue polypeptide: Probable indole-3-acetic acid-amido synthetase GH3.12 (613 aa).

This sequence belongs to the IAA-amido conjugating enzyme family. In terms of tissue distribution, expressed in roots.

In terms of biological role, may catalyze the synthesis of indole-3-acetic acid (IAA)-amino acid conjugates, providing a mechanism for the plant to cope with the presence of excess auxin. This is Probable indole-3-acetic acid-amido synthetase GH3.12 (GH3.12) from Oryza sativa subsp. japonica (Rice).